Reading from the N-terminus, the 179-residue chain is NAD(P)H-quinone oxidoreductase subunit J (179 aa).

Belongs to the complex I 30 kDa subunit family. NDH-1 can be composed of about 15 different subunits; different subcomplexes with different compositions have been identified which probably have different functions. In at one experiment the initiator methionine has been seen to be kept and removed.

It localises to the cellular thylakoid membrane. It carries out the reaction a plastoquinone + NADH + (n+1) H(+)(in) = a plastoquinol + NAD(+) + n H(+)(out). The enzyme catalyses a plastoquinone + NADPH + (n+1) H(+)(in) = a plastoquinol + NADP(+) + n H(+)(out). In terms of biological role, NDH-1 shuttles electrons from an unknown electron donor, via FMN and iron-sulfur (Fe-S) centers, to quinones in the respiratory and/or the photosynthetic chain. The immediate electron acceptor for the enzyme in this species is believed to be plastoquinone. Couples the redox reaction to proton translocation, and thus conserves the redox energy in a proton gradient. Cyanobacterial NDH-1 also plays a role in inorganic carbon-concentration. The protein is NAD(P)H-quinone oxidoreductase subunit J of Synechocystis sp. (strain ATCC 27184 / PCC 6803 / Kazusa).